Here is a 144-residue protein sequence, read N- to C-terminus: Large ribosomal subunit protein uL15 (144 aa).

The segment at 1-53 is disordered; sequence MRLNTLSPAEGAKHAPKRLGRGIGSGLGKTGGRGHKGQNSRSGGGVRRGFEGG. The span at 21-31 shows a compositional bias: gly residues; sequence RGIGSGLGKTG.

It belongs to the universal ribosomal protein uL15 family. Part of the 50S ribosomal subunit.

Binds to the 23S rRNA. In Pectobacterium atrosepticum (strain SCRI 1043 / ATCC BAA-672) (Erwinia carotovora subsp. atroseptica), this protein is Large ribosomal subunit protein uL15.